Consider the following 307-residue polypeptide: N-acetylmuramic acid 6-phosphate etherase (307 aa).

In terms of domain architecture, SIS spans 59–222 (TADRLRQGGR…STGVMVKLGK (164 aa)). E87 (proton donor) is an active-site residue. Residue E118 is part of the active site.

This sequence belongs to the GCKR-like family. MurNAc-6-P etherase subfamily. Homodimer.

The catalysed reaction is N-acetyl-D-muramate 6-phosphate + H2O = N-acetyl-D-glucosamine 6-phosphate + (R)-lactate. Its pathway is amino-sugar metabolism; N-acetylmuramate degradation. Functionally, specifically catalyzes the cleavage of the D-lactyl ether substituent of MurNAc 6-phosphate, producing GlcNAc 6-phosphate and D-lactate. The polypeptide is N-acetylmuramic acid 6-phosphate etherase (Trichormus variabilis (strain ATCC 29413 / PCC 7937) (Anabaena variabilis)).